We begin with the raw amino-acid sequence, 714 residues long: BBSome complex member bbs-2 (714 aa).

Coiled-coil stretches lie at residues 332-361 and 597-627; these read IREF…VEKD and MTEV…DSIA.

As to quaternary structure, part of BBSome complex, that contains at least bbs-1, bbs-2, bbs-4, bbs-5, osm-12, bbs-8/ttc-8 and bbs-9. As to expression, expressed in ciliated cells including amphid and both inner and outer labial neurons of the head and in both phasmid neurons PHA and PHB in the tail at larval stages L1 and L2.

Its subcellular location is the cell projection. It is found in the cilium. The protein localises to the cytoplasm. The protein resides in the cytoskeleton. It localises to the cilium basal body. Its subcellular location is the cilium axoneme. Component of the BBSome complex. The BBSome complex is thought to function as a coat complex required for sorting of specific membrane proteins to the primary cilia. The BBSome complex is required for ciliogenesis but is dispensable for centriolar satellite function. Required for proper BBSome complex assembly and its ciliary localization. Required for cilia biogenesis and both the assembly and movement of intraflagellar transport proteins along the ciliary axoneme. The sequence is that of BBSome complex member bbs-2 from Caenorhabditis elegans.